Reading from the N-terminus, the 425-residue chain is Glucose-1-phosphate adenylyltransferase (425 aa).

Residues Y114, G179, 194 to 195 (EK), and S212 contribute to the alpha-D-glucose 1-phosphate site.

Belongs to the bacterial/plant glucose-1-phosphate adenylyltransferase family. In terms of assembly, homotetramer.

The enzyme catalyses alpha-D-glucose 1-phosphate + ATP + H(+) = ADP-alpha-D-glucose + diphosphate. Its pathway is glycan biosynthesis; glycogen biosynthesis. In terms of biological role, involved in the biosynthesis of ADP-glucose, a building block required for the elongation reactions to produce glycogen. Catalyzes the reaction between ATP and alpha-D-glucose 1-phosphate (G1P) to produce pyrophosphate and ADP-Glc. The polypeptide is Glucose-1-phosphate adenylyltransferase (Pectobacterium carotovorum subsp. carotovorum (strain PC1)).